The sequence spans 550 residues: CTP synthase (550 aa).

Positions 1–277 are amidoligase domain; sequence MNGSADAGPR…GRAVERALGL (277 aa). Ser23 is a binding site for CTP. Ser23 lines the UTP pocket. An ATP-binding site is contributed by 24–29; sequence SLGKGI. Tyr64 contacts L-glutamine. Asp81 serves as a coordination point for ATP. The Mg(2+) site is built by Asp81 and Glu151. Residues 158-160, 198-203, and Lys234 contribute to the CTP site; these read DIE and KTKPTQ. Residues 198–203 and Lys234 contribute to the UTP site; that span reads KTKPTQ. Residues 302-549 form the Glutamine amidotransferase type-1 domain; the sequence is KIAIAGKYVK…VEAALAYQER (248 aa). Gly364 contributes to the L-glutamine binding site. Catalysis depends on Cys391, which acts as the Nucleophile; for glutamine hydrolysis. Residues 392–395, Glu415, and Arg472 each bind L-glutamine; that span reads LGLQ. Active-site residues include His522 and Glu524.

It belongs to the CTP synthase family. Homotetramer.

It carries out the reaction UTP + L-glutamine + ATP + H2O = CTP + L-glutamate + ADP + phosphate + 2 H(+). It catalyses the reaction L-glutamine + H2O = L-glutamate + NH4(+). The enzyme catalyses UTP + NH4(+) + ATP = CTP + ADP + phosphate + 2 H(+). It functions in the pathway pyrimidine metabolism; CTP biosynthesis via de novo pathway; CTP from UDP: step 2/2. Allosterically activated by GTP, when glutamine is the substrate; GTP has no effect on the reaction when ammonia is the substrate. The allosteric effector GTP functions by stabilizing the protein conformation that binds the tetrahedral intermediate(s) formed during glutamine hydrolysis. Inhibited by the product CTP, via allosteric rather than competitive inhibition. Functionally, catalyzes the ATP-dependent amination of UTP to CTP with either L-glutamine or ammonia as the source of nitrogen. Regulates intracellular CTP levels through interactions with the four ribonucleotide triphosphates. The protein is CTP synthase of Thermus thermophilus (strain ATCC BAA-163 / DSM 7039 / HB27).